Consider the following 351-residue polypeptide: 1-acylglycerol-3-phosphate O-acyltransferase ABHD5 (351 aa).

The AB hydrolase-1 domain occupies 79–184 (PLVLLHGFGG…LILVEPWGFP (106 aa)). Position 124 is a phosphoserine (Ser-124). An HXXXXD motif motif is present at residues 329 to 334 (HYVYAD).

It belongs to the peptidase S33 family. ABHD4/ABHD5 subfamily. In terms of assembly, interacts with ADRP and PLIN. Interacts with PNPLA2. Interacts with PLIN5; promotes interaction with PNPLA2.

Its subcellular location is the cytoplasm. It is found in the lipid droplet. It carries out the reaction a 1-acyl-sn-glycero-3-phosphate + an acyl-CoA = a 1,2-diacyl-sn-glycero-3-phosphate + CoA. The enzyme catalyses 1-(9Z-octadecenoyl)-sn-glycero-3-phosphate + (9Z)-octadecenoyl-CoA = 1,2-di-(9Z-octadecenoyl)-sn-glycero-3-phosphate + CoA. It catalyses the reaction 1-(9Z-octadecenoyl)-sn-glycero-3-phosphate + hexadecanoyl-CoA = 1-(9Z)-octadecenoyl-2-hexadecanoyl-sn-glycero-3-phosphate + CoA. The catalysed reaction is 1-(9Z-octadecenoyl)-sn-glycero-3-phosphate + octadecanoyl-CoA = 1-(9Z-octadecenoyl)-2-octadecanoyl-sn-glycero-3-phosphate + CoA. It carries out the reaction 1-(9Z-octadecenoyl)-sn-glycero-3-phosphate + (5Z,8Z,11Z,14Z)-eicosatetraenoyl-CoA = 1-(9Z)-octadecenoyl-2-(5Z,8Z,11Z,14Z)-eicosatetraenoyl-sn-glycero-3-phosphate + CoA. The enzyme catalyses eicosanoyl-CoA + 1-(9Z-octadecenoyl)-sn-glycero-3-phosphate = 1-(9Z)-octadecenoyl-2-eicosanoyl-sn-glycero-3-phosphate + CoA. It catalyses the reaction 1-hexadecanoyl-sn-glycero-3-phosphate + (9Z)-octadecenoyl-CoA = 1-hexadecanoyl-2-(9Z-octadecenoyl)-sn-glycero-3-phosphate + CoA. The catalysed reaction is 1-octadecanoyl-sn-glycero-3-phosphate + (9Z)-octadecenoyl-CoA = 1-octadecanoyl-2-(9Z-octadecenoyl)-sn-glycero-3-phosphate + CoA. It carries out the reaction 1-(5Z,8Z,11Z,14Z-eicosatetraenoyl)-sn-glycero-3-phosphate + (9Z)-octadecenoyl-CoA = 1-(5Z,8Z,11Z,14Z)-eicosatetraenoyl-2-(9Z)-octadecenoyl-sn-glycero-3-phosphate + CoA. Acyltransferase activity is inhibited by detergents such as Triton X-100 and 3-[(3-cholamidopropyl)dimethylammonio]-1-propanesulfonate (CHAPS). Acyltransferase activity is inhibited by the presence of magnesium and calcium. In terms of biological role, coenzyme A-dependent lysophosphatidic acid acyltransferase that catalyzes the transfer of an acyl group on a lysophosphatidic acid. Functions preferentially with 1-oleoyl-lysophosphatidic acid followed by 1-palmitoyl-lysophosphatidic acid, 1-stearoyl-lysophosphatidic acid and 1-arachidonoyl-lysophosphatidic acid as lipid acceptor. Functions preferentially with arachidonoyl-CoA followed by oleoyl-CoA as acyl group donors. Functions in phosphatidic acid biosynthesis. May regulate the cellular storage of triacylglycerol through activation of the phospholipase PNPLA2. Involved in keratinocyte differentiation. Regulates lipid droplet fusion. This Rattus norvegicus (Rat) protein is 1-acylglycerol-3-phosphate O-acyltransferase ABHD5.